A 548-amino-acid polypeptide reads, in one-letter code: MAKIIAFDEEARRGLEKGLNTLADAVKVTLGPKGRNVVLEKAWGAPTITNDGVTIAREIELEDPYEKIGAELVKEVAKKTDDVAGDGTTTATVLAQALVREGLRNVAAGSNPMGIKRGIEKAVAQVTEKLLEAAKEVETEEQIAATAGISAADPAIGAQIAKAMYAVGGGKLNKDSVITVEESNTFGVELEVTEGMRFDKGYISGYFATDMERLEAVLEDPYILLVSGKISNIKDLLPLLEKVMQSGKPLLIISEDVEGEALSTLVVNKIRGTFKSVAVKAPGFGDRRKAQLQDIAVLTGGQVISEEVGLSLETADLPLLGQARKVVVTKDDTTIVDGAGSEAQIEGRVNQIRVEIENSDSDYDREKLNERLAKLAGGVAVLKVGAATEVELKERKHRIEDAVRNAKAAVEEGIVAGGGVALLQAAHVLDNDLELSGDEATGVRIVREALTAPLKQIAANAGLEPGVVADKVSQLPQGEGLNAANGEYVDLMAAGINDPVKVTRSALQNAASIAALFLTTEAVVADKPQPAGAAGMPGADEMGGMGGF.

Residues 29 to 32, 86 to 90, glycine 418, 482 to 484, and aspartate 498 each bind ATP; these read TLGP, DGTTT, and NAA.

This sequence belongs to the chaperonin (HSP60) family. In terms of assembly, forms a cylinder of 14 subunits composed of two heptameric rings stacked back-to-back. Interacts with the co-chaperonin GroES.

It is found in the cytoplasm. It catalyses the reaction ATP + H2O + a folded polypeptide = ADP + phosphate + an unfolded polypeptide.. Together with its co-chaperonin GroES, plays an essential role in assisting protein folding. The GroEL-GroES system forms a nano-cage that allows encapsulation of the non-native substrate proteins and provides a physical environment optimized to promote and accelerate protein folding. The protein is Chaperonin GroEL 2 of Corynebacterium glutamicum (strain ATCC 13032 / DSM 20300 / JCM 1318 / BCRC 11384 / CCUG 27702 / LMG 3730 / NBRC 12168 / NCIMB 10025 / NRRL B-2784 / 534).